We begin with the raw amino-acid sequence, 631 residues long: BTB/POZ domain-containing protein At1g67900 (631 aa).

The BTB domain occupies 28–93 (SDFTIEVSGS…CYGITITISA (66 aa)). The NPH3 domain maps to 200–509 (GWWAEDIAEL…VQVLFYEQAR (310 aa)). The segment at 361-399 (QTSPPTSPLRGKKGMMDRRRRSRSAENIDLEFQESRRSS) is disordered. Residues 370 to 382 (RGKKGMMDRRRRS) are compositionally biased toward basic residues. Tyr-450 bears the Phosphotyrosine mark. The residue at position 567 (Ser-567) is a Phosphoserine.

This sequence belongs to the NPH3 family.

Its pathway is protein modification; protein ubiquitination. Functionally, may act as a substrate-specific adapter of an E3 ubiquitin-protein ligase complex (CUL3-RBX1-BTB) which mediates the ubiquitination and subsequent proteasomal degradation of target proteins. The chain is BTB/POZ domain-containing protein At1g67900 from Arabidopsis thaliana (Mouse-ear cress).